We begin with the raw amino-acid sequence, 433 residues long: Peptidoglycan DD-endopeptidase ShyC (433 aa).

Residues 10–30 (WLHRVLITAFSAIIVFAIFFL) traverse the membrane as a helical segment. Zn(2+) contacts are provided by His-299, Asp-303, and His-380.

It belongs to the peptidase M23B family. Zn(2+) is required as a cofactor.

It is found in the cell inner membrane. Its pathway is cell wall degradation; peptidoglycan degradation. Reduced activity in 0.5 mM EDTA and a complete loss of activity at higher EDTA concentrations. Its function is as follows. Cell wall peptidoglycan (PG) DD-endopeptidase. Hydrolyzes peptide cross-links which covalently connect adjacent PG strands probably to allow insertion of new glycans and thus cell wall expansion. Degrades purified whole PG sacculi in vitro. The chain is Peptidoglycan DD-endopeptidase ShyC from Vibrio cholerae serotype O1 (strain ATCC 39315 / El Tor Inaba N16961).